A 162-amino-acid chain; its full sequence is Regulator of sigma D (162 aa).

Belongs to the Rsd/AlgQ family. In terms of assembly, interacts with RpoD.

It localises to the cytoplasm. Its function is as follows. Binds RpoD and negatively regulates RpoD-mediated transcription activation by preventing the interaction between the primary sigma factor RpoD with the catalytic core of the RNA polymerase and with promoter DNA. May be involved in replacement of the RNA polymerase sigma subunit from RpoD to RpoS during the transition from exponential growth to the stationary phase. The polypeptide is Regulator of sigma D (Salmonella typhi).